A 298-amino-acid polypeptide reads, in one-letter code: Tyrosine recombinase XerC (298 aa).

The region spanning Met1–Thr85 is the Core-binding (CB) domain. One can recognise a Tyr recombinase domain in the interval His106–Met291. Active-site residues include Arg146, Lys170, His243, Arg246, and His269. The active-site O-(3'-phospho-DNA)-tyrosine intermediate is Tyr278.

This sequence belongs to the 'phage' integrase family. XerC subfamily. As to quaternary structure, forms a cyclic heterotetrameric complex composed of two molecules of XerC and two molecules of XerD.

Its subcellular location is the cytoplasm. Functionally, site-specific tyrosine recombinase, which acts by catalyzing the cutting and rejoining of the recombining DNA molecules. The XerC-XerD complex is essential to convert dimers of the bacterial chromosome into monomers to permit their segregation at cell division. It also contributes to the segregational stability of plasmids. This is Tyrosine recombinase XerC from Lacticaseibacillus paracasei (strain ATCC 334 / BCRC 17002 / CCUG 31169 / CIP 107868 / KCTC 3260 / NRRL B-441) (Lactobacillus paracasei).